A 174-amino-acid chain; its full sequence is Ribosome maturation factor RimP (174 aa).

This sequence belongs to the RimP family.

It is found in the cytoplasm. Functionally, required for maturation of 30S ribosomal subunits. In Acinetobacter baumannii (strain AB307-0294), this protein is Ribosome maturation factor RimP.